Consider the following 166-residue polypeptide: NADH-quinone oxidoreductase subunit B (166 aa).

[4Fe-4S] cluster-binding residues include C44, C45, C110, and C140.

It belongs to the complex I 20 kDa subunit family. In terms of assembly, NDH-1 is composed of 14 different subunits. Subunits NuoB, C, D, E, F, and G constitute the peripheral sector of the complex. It depends on [4Fe-4S] cluster as a cofactor.

The protein resides in the cell membrane. It catalyses the reaction a quinone + NADH + 5 H(+)(in) = a quinol + NAD(+) + 4 H(+)(out). In terms of biological role, NDH-1 shuttles electrons from NADH, via FMN and iron-sulfur (Fe-S) centers, to quinones in the respiratory chain. The immediate electron acceptor for the enzyme in this species is believed to be a menaquinone. Couples the redox reaction to proton translocation (for every two electrons transferred, four hydrogen ions are translocated across the cytoplasmic membrane), and thus conserves the redox energy in a proton gradient. The protein is NADH-quinone oxidoreductase subunit B of Carboxydothermus hydrogenoformans (strain ATCC BAA-161 / DSM 6008 / Z-2901).